The chain runs to 222 residues: Probable transaldolase 2 (222 aa).

K90 (schiff-base intermediate with substrate) is an active-site residue.

This sequence belongs to the transaldolase family. Type 3B subfamily.

The protein localises to the cytoplasm. The catalysed reaction is D-sedoheptulose 7-phosphate + D-glyceraldehyde 3-phosphate = D-erythrose 4-phosphate + beta-D-fructose 6-phosphate. It functions in the pathway carbohydrate degradation; pentose phosphate pathway; D-glyceraldehyde 3-phosphate and beta-D-fructose 6-phosphate from D-ribose 5-phosphate and D-xylulose 5-phosphate (non-oxidative stage): step 2/3. In terms of biological role, transaldolase is important for the balance of metabolites in the pentose-phosphate pathway. In Bacillus anthracis, this protein is Probable transaldolase 2.